Here is a 45-residue protein sequence, read N- to C-terminus: Metallothionein-like protein 1C (45 aa).

Belongs to the metallothionein superfamily. Type 15 family. In terms of tissue distribution, widely expressed at low levels.

In terms of biological role, metallothioneins have a high content of cysteine residues that bind various heavy metals. Confers tolerance to cadmium (Cd) and plays a role in Cd and zinc (Zn) homeostasis. The protein is Metallothionein-like protein 1C (MT1C) of Arabidopsis thaliana (Mouse-ear cress).